The primary structure comprises 620 residues: 1-deoxy-D-xylulose-5-phosphate synthase (620 aa).

Residues H80 and 121–123 (GHS) contribute to the thiamine diphosphate site. Position 152 (D152) interacts with Mg(2+). Thiamine diphosphate is bound by residues 153–154 (GA), N181, Y288, and E370. Residue N181 coordinates Mg(2+).

Belongs to the transketolase family. DXPS subfamily. In terms of assembly, homodimer. Mg(2+) is required as a cofactor. It depends on thiamine diphosphate as a cofactor.

It catalyses the reaction D-glyceraldehyde 3-phosphate + pyruvate + H(+) = 1-deoxy-D-xylulose 5-phosphate + CO2. The protein operates within metabolic intermediate biosynthesis; 1-deoxy-D-xylulose 5-phosphate biosynthesis; 1-deoxy-D-xylulose 5-phosphate from D-glyceraldehyde 3-phosphate and pyruvate: step 1/1. Catalyzes the acyloin condensation reaction between C atoms 2 and 3 of pyruvate and glyceraldehyde 3-phosphate to yield 1-deoxy-D-xylulose-5-phosphate (DXP). This Escherichia coli O6:K15:H31 (strain 536 / UPEC) protein is 1-deoxy-D-xylulose-5-phosphate synthase.